Reading from the N-terminus, the 494-residue chain is Guanosine-5'-triphosphate,3'-diphosphate pyrophosphatase (494 aa).

It belongs to the GppA/Ppx family. GppA subfamily.

It carries out the reaction guanosine 3'-diphosphate 5'-triphosphate + H2O = guanosine 3',5'-bis(diphosphate) + phosphate + H(+). The protein operates within purine metabolism; ppGpp biosynthesis; ppGpp from GTP: step 2/2. Catalyzes the conversion of pppGpp to ppGpp. Guanosine pentaphosphate (pppGpp) is a cytoplasmic signaling molecule which together with ppGpp controls the 'stringent response', an adaptive process that allows bacteria to respond to amino acid starvation, resulting in the coordinated regulation of numerous cellular activities. In Shigella flexneri, this protein is Guanosine-5'-triphosphate,3'-diphosphate pyrophosphatase.